The chain runs to 199 residues: MTVTTEGRTIEGRPIGARPVPRLKQRYRDEIAPALREQFSYRNVMQIPGVVKVVVNMGVGDAARDAKLIDGAVRDLAAITGQKPAVRRAKKSIAQFKLREGMPIGAKVTLRGDRMWEFLDRLVTIALPRIRDFRGLSPKQFDGAGNYTFGVTEQSIFHEIDIDRIDRVRGMDITVVTTATTDDEGRALLRALGFPFREN.

The protein belongs to the universal ribosomal protein uL5 family. As to quaternary structure, part of the 50S ribosomal subunit; part of the 5S rRNA/L5/L18/L25 subcomplex. Contacts the 5S rRNA and the P site tRNA. Forms a bridge to the 30S subunit in the 70S ribosome.

Functionally, this is one of the proteins that bind and probably mediate the attachment of the 5S RNA into the large ribosomal subunit, where it forms part of the central protuberance. In the 70S ribosome it contacts protein S13 of the 30S subunit (bridge B1b), connecting the 2 subunits; this bridge is implicated in subunit movement. Contacts the P site tRNA; the 5S rRNA and some of its associated proteins might help stabilize positioning of ribosome-bound tRNAs. In Frankia casuarinae (strain DSM 45818 / CECT 9043 / HFP020203 / CcI3), this protein is Large ribosomal subunit protein uL5.